Here is a 427-residue protein sequence, read N- to C-terminus: 3-phosphoshikimate 1-carboxyvinyltransferase (427 aa).

3 residues coordinate 3-phosphoshikimate: K27, S28, and R32. Position 27 (K27) interacts with phosphoenolpyruvate. Residues G95 and R123 each coordinate phosphoenolpyruvate. Residues S166, S167, Q168, S192, D305, and K332 each contribute to the 3-phosphoshikimate site. Residue Q168 participates in phosphoenolpyruvate binding. The Proton acceptor role is filled by D305. Phosphoenolpyruvate is bound by residues R336 and R377.

The protein belongs to the EPSP synthase family. Monomer.

It localises to the cytoplasm. The catalysed reaction is 3-phosphoshikimate + phosphoenolpyruvate = 5-O-(1-carboxyvinyl)-3-phosphoshikimate + phosphate. Its pathway is metabolic intermediate biosynthesis; chorismate biosynthesis. Catalyzes the transfer of the enolpyruvyl moiety of phosphoenolpyruvate (PEP) to the 5-hydroxyl of shikimate-3-phosphate (S3P) to produce enolpyruvyl shikimate-3-phosphate and inorganic phosphate. In Aeropyrum pernix (strain ATCC 700893 / DSM 11879 / JCM 9820 / NBRC 100138 / K1), this protein is 3-phosphoshikimate 1-carboxyvinyltransferase.